Here is a 279-residue protein sequence, read N- to C-terminus: Ribosomal RNA small subunit methyltransferase A (279 aa).

S-adenosyl-L-methionine-binding residues include His15, Leu17, Gly42, Glu64, Asp89, and Asn109.

It belongs to the class I-like SAM-binding methyltransferase superfamily. rRNA adenine N(6)-methyltransferase family. RsmA subfamily.

Its subcellular location is the cytoplasm. The enzyme catalyses adenosine(1518)/adenosine(1519) in 16S rRNA + 4 S-adenosyl-L-methionine = N(6)-dimethyladenosine(1518)/N(6)-dimethyladenosine(1519) in 16S rRNA + 4 S-adenosyl-L-homocysteine + 4 H(+). Its function is as follows. Specifically dimethylates two adjacent adenosines (A1518 and A1519) in the loop of a conserved hairpin near the 3'-end of 16S rRNA in the 30S particle. May play a critical role in biogenesis of 30S subunits. The protein is Ribosomal RNA small subunit methyltransferase A of Prochlorococcus marinus (strain SARG / CCMP1375 / SS120).